Consider the following 326-residue polypeptide: Putative ribose-phosphate pyrophosphokinase 2 (326 aa).

ATP is bound by residues Asp43 to Glu45 and Arg102 to Gln103. His136 is a Mg(2+) binding site. Residues Asp225 and Asn229–Thr233 each bind D-ribose 5-phosphate.

This sequence belongs to the ribose-phosphate pyrophosphokinase family. Class I subfamily. Homohexamer. It depends on Mg(2+) as a cofactor.

It is found in the cytoplasm. It carries out the reaction D-ribose 5-phosphate + ATP = 5-phospho-alpha-D-ribose 1-diphosphate + AMP + H(+). Its pathway is metabolic intermediate biosynthesis; 5-phospho-alpha-D-ribose 1-diphosphate biosynthesis; 5-phospho-alpha-D-ribose 1-diphosphate from D-ribose 5-phosphate (route I): step 1/1. Its function is as follows. Involved in the biosynthesis of the central metabolite phospho-alpha-D-ribosyl-1-pyrophosphate (PRPP) via the transfer of pyrophosphoryl group from ATP to 1-hydroxyl of ribose-5-phosphate (Rib-5-P). This Streptococcus pyogenes serotype M3 (strain SSI-1) protein is Putative ribose-phosphate pyrophosphokinase 2.